We begin with the raw amino-acid sequence, 430 residues long: KIN17-like protein (430 aa).

The C2H2-type zinc-finger motif lies at Cys28–His50. The winged helix-turn-helix (wHTH) stretch occupies residues Gln51–Lys160. The stretch at Glu147–Ser183 forms a coiled coil. The Nuclear localization signal (NLS) signature appears at Lys155–Arg158. 2 disordered regions span residues Arg179–Ala230 and Glu261–Ala284. The span at Glu209–Ala224 shows a compositional bias: acidic residues. Residues Glu261–Lys278 are compositionally biased toward basic and acidic residues. Positions Asp283–Lys312 form a coiled coil. Residues Gly319–Thr370 form a C-terminal subdomain A region. The tract at residues Gly376–Lys427 is C-terminal subdomain B.

The protein belongs to the KIN17 family.

The protein localises to the nucleus. The sequence is that of KIN17-like protein from Oryza sativa subsp. indica (Rice).